Here is a 179-residue protein sequence, read N- to C-terminus: MSRVAKNPVKLPSGVEVKLVGQLLSVKGPKGTLELIIHSSVEVEIVEEAGELRFAARNGDQQTRAMAGTTRALVNNMVQGVSQGFERKLQLVGVGYKAQAKGTVLNLALGFSHPVDYELPNGITAETPSQTDILIRGIDKQLVGQVAAEIRDFRRPEPYKGKGVRYADEVVRRKEAKKK.

Belongs to the universal ribosomal protein uL6 family. In terms of assembly, part of the 50S ribosomal subunit.

Functionally, this protein binds to the 23S rRNA, and is important in its secondary structure. It is located near the subunit interface in the base of the L7/L12 stalk, and near the tRNA binding site of the peptidyltransferase center. The sequence is that of Large ribosomal subunit protein uL6 from Pseudomonas savastanoi pv. phaseolicola (strain 1448A / Race 6) (Pseudomonas syringae pv. phaseolicola (strain 1448A / Race 6)).